Reading from the N-terminus, the 597-residue chain is Elongation factor 4 (597 aa).

Residues 2–184 form the tr-type G domain; sequence KNIRNFSIIA…EIVAKIPAPT (183 aa). GTP contacts are provided by residues 14–19 and 131–134; these read DHGKST and NKID.

This sequence belongs to the TRAFAC class translation factor GTPase superfamily. Classic translation factor GTPase family. LepA subfamily.

It localises to the cell inner membrane. The enzyme catalyses GTP + H2O = GDP + phosphate + H(+). In terms of biological role, required for accurate and efficient protein synthesis under certain stress conditions. May act as a fidelity factor of the translation reaction, by catalyzing a one-codon backward translocation of tRNAs on improperly translocated ribosomes. Back-translocation proceeds from a post-translocation (POST) complex to a pre-translocation (PRE) complex, thus giving elongation factor G a second chance to translocate the tRNAs correctly. Binds to ribosomes in a GTP-dependent manner. The sequence is that of Elongation factor 4 from Neisseria meningitidis serogroup C (strain 053442).